The chain runs to 344 residues: Meiotic recombination protein DMC1 homolog A (344 aa).

133-140 contributes to the ATP binding site; the sequence is GEFRSGKT. A dsDNA-binding site is contributed by Arg235. Positions 235, 238, 241, 247, and 315 each coordinate ssDNA. 2 residues coordinate dsDNA: Arg241 and Arg247.

The protein belongs to the RecA family. DMC1 subfamily. In terms of tissue distribution, expressed in meiotic young panicles.

The protein localises to the nucleus. Functionally, recombinase that may participate in meiotic recombination, specifically in homologous strand assimilation, which is required for the resolution of meiotic double-strand breaks. Exhibits DNA-dependent ATPase activity when bound to single-stranded DNA (ssDNA). Mediates renaturation of homologous complementary strands as well as assimilation of single strands into homologous supercoiled duplexes leading to D-loop formation. Binds circular single-stranded DNA (ssDNA) and circular double-stranded DNA (dsDNA) in vitro. Catalyzes DNA homologous renaturation and DNA strand exchange. The rates of these activities are dependent on the state of ATP hydrolysis. Forms helical filaments along ssDNA and dsDNA, and promotes strand exchange between ssDNA and dsDNA with long DNA substrates of several thousand base pairs. The presence of the replication protein A is not required for this activity. Seems to be required for homologous pairing and subsequent chromosome segregation during male meiosis. May be not directly required for homologous pairing during male meiosis. Required for synaptonemal complex assembly and crossover formation. Functions redundantly with DMC1B. This is Meiotic recombination protein DMC1 homolog A from Oryza sativa subsp. japonica (Rice).